Reading from the N-terminus, the 117-residue chain is Ribosome-binding factor A (117 aa).

The protein belongs to the RbfA family. In terms of assembly, monomer. Binds 30S ribosomal subunits, but not 50S ribosomal subunits or 70S ribosomes.

It is found in the cytoplasm. In terms of biological role, one of several proteins that assist in the late maturation steps of the functional core of the 30S ribosomal subunit. Associates with free 30S ribosomal subunits (but not with 30S subunits that are part of 70S ribosomes or polysomes). Required for efficient processing of 16S rRNA. May interact with the 5'-terminal helix region of 16S rRNA. The chain is Ribosome-binding factor A from Bacillus subtilis (strain 168).